A 148-amino-acid polypeptide reads, in one-letter code: FAD synthase (148 aa).

Residues 9–10 (TF), 14–17 (HPGH), N92, and Y119 contribute to the ATP site.

The protein belongs to the archaeal FAD synthase family. In terms of assembly, homodimer. Requires a divalent metal cation as cofactor.

It carries out the reaction FMN + ATP + H(+) = FAD + diphosphate. It functions in the pathway cofactor biosynthesis; FAD biosynthesis; FAD from FMN: step 1/1. In terms of biological role, catalyzes the transfer of the AMP portion of ATP to flavin mononucleotide (FMN) to produce flavin adenine dinucleotide (FAD) coenzyme. The polypeptide is FAD synthase (Methanolacinia petrolearia (strain DSM 11571 / OCM 486 / SEBR 4847) (Methanoplanus petrolearius)).